A 373-amino-acid polypeptide reads, in one-letter code: 4-hydroxy-3-methylbut-2-en-1-yl diphosphate synthase (flavodoxin) (373 aa).

Positions 270, 273, 305, and 312 each coordinate [4Fe-4S] cluster.

Belongs to the IspG family. [4Fe-4S] cluster is required as a cofactor.

The enzyme catalyses (2E)-4-hydroxy-3-methylbut-2-enyl diphosphate + oxidized [flavodoxin] + H2O + 2 H(+) = 2-C-methyl-D-erythritol 2,4-cyclic diphosphate + reduced [flavodoxin]. It functions in the pathway isoprenoid biosynthesis; isopentenyl diphosphate biosynthesis via DXP pathway; isopentenyl diphosphate from 1-deoxy-D-xylulose 5-phosphate: step 5/6. Functionally, converts 2C-methyl-D-erythritol 2,4-cyclodiphosphate (ME-2,4cPP) into 1-hydroxy-2-methyl-2-(E)-butenyl 4-diphosphate. In Photobacterium profundum (strain SS9), this protein is 4-hydroxy-3-methylbut-2-en-1-yl diphosphate synthase (flavodoxin).